The sequence spans 110 residues: Large ribosomal subunit protein uL22 (110 aa).

It belongs to the universal ribosomal protein uL22 family. As to quaternary structure, part of the 50S ribosomal subunit.

This protein binds specifically to 23S rRNA; its binding is stimulated by other ribosomal proteins, e.g. L4, L17, and L20. It is important during the early stages of 50S assembly. It makes multiple contacts with different domains of the 23S rRNA in the assembled 50S subunit and ribosome. Its function is as follows. The globular domain of the protein is located near the polypeptide exit tunnel on the outside of the subunit, while an extended beta-hairpin is found that lines the wall of the exit tunnel in the center of the 70S ribosome. This is Large ribosomal subunit protein uL22 from Actinobacillus pleuropneumoniae serotype 5b (strain L20).